Consider the following 395-residue polypeptide: Acetate kinase (395 aa).

Mg(2+) is bound at residue N8. K15 contacts ATP. Substrate is bound at residue R90. Residue D147 is the Proton donor/acceptor of the active site. Residues 207 to 211 (HLGNG), 284 to 286 (DMR), and 330 to 334 (GIGEN) contribute to the ATP site. E383 provides a ligand contact to Mg(2+).

The protein belongs to the acetokinase family. Homodimer. It depends on Mg(2+) as a cofactor. The cofactor is Mn(2+).

Its subcellular location is the cytoplasm. The catalysed reaction is acetate + ATP = acetyl phosphate + ADP. Its pathway is metabolic intermediate biosynthesis; acetyl-CoA biosynthesis; acetyl-CoA from acetate: step 1/2. Its function is as follows. Catalyzes the formation of acetyl phosphate from acetate and ATP. Can also catalyze the reverse reaction. This Enterococcus faecalis (strain ATCC 700802 / V583) protein is Acetate kinase.